A 372-amino-acid chain; its full sequence is Glutamate 5-kinase (372 aa).

K14 contacts ATP. Substrate contacts are provided by S54, D141, and N153. ATP-binding positions include 173–174 and 215–221; these read TD and TGGMATK. Residues 280-358 enclose the PUA domain; sequence RGKLILDQGA…DDIESLLGYD (79 aa).

This sequence belongs to the glutamate 5-kinase family.

Its subcellular location is the cytoplasm. It catalyses the reaction L-glutamate + ATP = L-glutamyl 5-phosphate + ADP. It participates in amino-acid biosynthesis; L-proline biosynthesis; L-glutamate 5-semialdehyde from L-glutamate: step 1/2. Its function is as follows. Catalyzes the transfer of a phosphate group to glutamate to form L-glutamate 5-phosphate. The sequence is that of Glutamate 5-kinase from Shewanella sediminis (strain HAW-EB3).